The chain runs to 387 residues: UPF0400 protein C337.03 (387 aa).

The CID domain maps to 1 to 133 (MALTPDTVSS…SLQERFNNAE (133 aa)). The stretch at 177 to 255 (KSYLEKQSDY…IISNLENKES (79 aa)) forms a coiled coil. The disordered stretch occupies residues 257-387 (TATSTLTDAG…SSAAGLYGDS (131 aa)). Low complexity predominate over residues 283-297 (SPPSSSPNSDDAYSP). Over residues 298–323 (QVDSYSPSINSVPYTSNIVENPSEDN) the composition is skewed to polar residues. Acidic residues predominate over residues 353–365 (NEEESKELPEDSD). A compositionally biased stretch (low complexity) spans 370–379 (DSSPSSDDSS). At serine 372 the chain carries Phosphoserine.

This sequence belongs to the UPF0400 (RTT103) family.

This Schizosaccharomyces pombe (strain 972 / ATCC 24843) (Fission yeast) protein is UPF0400 protein C337.03.